The chain runs to 291 residues: Citrate lyase subunit beta (291 aa).

Substrate-binding residues include arginine 66 and glutamate 129. Residues glutamate 129 and aspartate 156 each contribute to the Mg(2+) site.

This sequence belongs to the HpcH/HpaI aldolase family. Citrate lyase beta subunit subfamily. Oligomer with a subunit composition of (alpha,beta,gamma)6. Mg(2+) serves as cofactor.

Its subcellular location is the cytoplasm. It carries out the reaction citrate = oxaloacetate + acetate. It catalyses the reaction (3S)-citryl-CoA = oxaloacetate + acetyl-CoA. In terms of biological role, represents a citryl-ACP lyase. In Haemophilus influenzae (strain ATCC 51907 / DSM 11121 / KW20 / Rd), this protein is Citrate lyase subunit beta (citE).